We begin with the raw amino-acid sequence, 511 residues long: Exodeoxyribonuclease 7 large subunit (511 aa).

Belongs to the XseA family. In terms of assembly, heterooligomer composed of large and small subunits.

It localises to the cytoplasm. It carries out the reaction Exonucleolytic cleavage in either 5'- to 3'- or 3'- to 5'-direction to yield nucleoside 5'-phosphates.. Its function is as follows. Bidirectionally degrades single-stranded DNA into large acid-insoluble oligonucleotides, which are then degraded further into small acid-soluble oligonucleotides. This Brucella ovis (strain ATCC 25840 / 63/290 / NCTC 10512) protein is Exodeoxyribonuclease 7 large subunit.